Here is a 375-residue protein sequence, read N- to C-terminus: EP300-interacting inhibitor of differentiation 3 (375 aa).

Residues 23–51 (AWQHLVKQEEEEAVKKEEKEEGEDEEEEG) adopt a coiled-coil conformation. Residues 30 to 68 (QEEEEAVKKEEKEEGEDEEEEGSDSSSDDPNPEPPCMHP) are disordered. Residues 42 to 60 (EEGEDEEEEGSDSSSDDPN) show a composition bias toward acidic residues.

It belongs to the NSE4 family. Component of the SMC5-SMC6 complex which consists at least of SMC5, SMC6, NSMCE2, NSMCE1, NSMCE4A or EID3 and NSMCE3; EID3 seems to be a testis-specific subunit. NSMCE1, NSMCE4A or EID3 and NSMCE3 probably form a subcomplex that bridges the head domains of the SMC5:SMC6 heterodimer. Homodimer, and heterodimer with EID2. Interacts with the C-terminal region of CREBBP.

It is found in the nucleus. The protein localises to the cytoplasm. It localises to the chromosome. The protein resides in the telomere. In terms of biological role, tissue-specific component of the SMC5-SMC6 complex, a complex involved in repair of DNA double-strand breaks by homologous recombination. The complex may promote sister chromatid homologous recombination by recruiting the SMC1-SMC3 cohesin complex to double-strand breaks. The complex is required for telomere maintenance via recombination and mediates sumoylation of shelterin complex (telosome) components. Its function is as follows. Acts as a repressor of nuclear receptor-dependent transcription possibly by interfering with CREBBP-dependent coactivation. May function as a coinhibitor of other CREBBP/EP300-dependent transcription factors. The protein is EP300-interacting inhibitor of differentiation 3 of Mus musculus (Mouse).